We begin with the raw amino-acid sequence, 640 residues long: Dextranase (640 aa).

The N-terminal stretch at 1-32 is a signal peptide; it reads MPGTGLGRLAKHVTAAAAVFLISTGAVLPAQA.

Belongs to the glycosyl hydrolase 49 family.

Its subcellular location is the secreted. It catalyses the reaction Endohydrolysis of (1-&gt;6)-alpha-D-glucosidic linkages in dextran.. This is Dextranase from Arthrobacter globiformis.